A 414-amino-acid chain; its full sequence is Putative competence-damage inducible protein (414 aa).

The protein belongs to the CinA family.

This chain is Putative competence-damage inducible protein, found in Listeria monocytogenes serotype 4b (strain CLIP80459).